Here is a 454-residue protein sequence, read N- to C-terminus: tRNA(Ile)-lysidine synthase (454 aa).

Residue 31-36 (SGGADS) participates in ATP binding.

Belongs to the tRNA(Ile)-lysidine synthase family.

The protein resides in the cytoplasm. The catalysed reaction is cytidine(34) in tRNA(Ile2) + L-lysine + ATP = lysidine(34) in tRNA(Ile2) + AMP + diphosphate + H(+). In terms of biological role, ligates lysine onto the cytidine present at position 34 of the AUA codon-specific tRNA(Ile) that contains the anticodon CAU, in an ATP-dependent manner. Cytidine is converted to lysidine, thus changing the amino acid specificity of the tRNA from methionine to isoleucine. The polypeptide is tRNA(Ile)-lysidine synthase (Porphyromonas gingivalis (strain ATCC 33277 / DSM 20709 / CIP 103683 / JCM 12257 / NCTC 11834 / 2561)).